Consider the following 353-residue polypeptide: Chloroplastic lipocalin (353 aa).

The span at 1–18 shows a compositional bias: low complexity; the sequence is MILLSSSISLSRPVSSQS. Residues 1 to 27 are disordered; sequence MILLSSSISLSRPVSSQSFSPPAATST. The N-terminal 39 residues, 1–39, are a transit peptide targeting the chloroplast; the sequence is MILLSSSISLSRPVSSQSFSPPAATSTRRSHSSVTVKCC. Cys163 and Cys299 are oxidised to a cystine.

This sequence belongs to the calycin superfamily. Lipocalin family. In terms of tissue distribution, expressed in leaves at low levels (at protein levels). Present in seeds.

It is found in the plastid. The protein resides in the chloroplast thylakoid lumen. In terms of biological role, lipocalin that prevents thylakoidal membrane lipids peroxidation and confers protection against oxidative stress, especially mediated by singlet oxygen in response to high light and other stress (e.g. heat shocks). Required for seed longevity by ensuring polyunsaturated lipids integrity. This chain is Chloroplastic lipocalin, found in Arabidopsis thaliana (Mouse-ear cress).